Consider the following 135-residue polypeptide: Protein Wnt-7b (135 aa).

Cystine bridges form between cysteine 3–cysteine 17 and cysteine 5–cysteine 12. Serine 9 is lipidated: O-palmitoleoyl serine; by PORCN. The segment at 41–69 (VEVVRANRLRQPTFLKIKKVRSYQKPMET) is disordered linker. 3 disulfide bridges follow: cysteine 81-cysteine 112, cysteine 97-cysteine 107, and cysteine 134-cysteine 135. Residue asparagine 98 is glycosylated (N-linked (GlcNAc...) asparagine).

This sequence belongs to the Wnt family. Palmitoleoylation is required for efficient binding to frizzled receptors. Depalmitoleoylation leads to Wnt signaling pathway inhibition. As to expression, in adults, in brain and lung.

It localises to the secreted. It is found in the extracellular space. Its subcellular location is the extracellular matrix. In terms of biological role, ligand for members of the frizzled family of seven transmembrane receptors that functions in the canonical Wnt/beta-catenin signaling pathway. Required for normal fusion of the chorion and the allantois during placenta development. Required for central nervous system (CNS) angiogenesis and blood-brain barrier regulation. The protein is Protein Wnt-7b (wnt7b) of Xenopus laevis (African clawed frog).